A 542-amino-acid chain; its full sequence is MGEKMAEEERFPNTTHEGFNVTLHTTLVVTTKLVLPTPGKPILPVQTGEQAQQEEQSSGMTIFFSLLVLAICIILVHLLIRYRLHFLPESVAVVSLGILMGAVIKIIEFKKLANWKEEEMFRPNMFFLLLLPPIIFESGYSLHKGNFFQNIGSITLFAVFGTAISAFVVGGGIYFLGQADVISKLNMTDSFAFGSLISAVDPVATIAIFNALHVDPVLNMLVFGESILNDAVSIVLTNTAEGLTRKNMSDVSGWQTFLQALDYFLKMFFGSAALGTLTGLISALVLKHIDLRKTPSLEFGMMIIFAYLPYGLAEGISLSETCVFAFLGLSIFSFPHKFEISFVIWCIVLVLFGRAVNIFPLSYLLNFFRDHKITPKMMFIMWFSGLRGAIPYALSLHLDLEPMEKRQLIGTTTIVIVLFTILLLGGSTMPLIRLMDIEDAKARRRNKKDVNLSKTEKMGNTVESEHLSELTEEEYEAHYIRRQDLKGFMWLDAKYLNPFFTRRLTQEDLHHGRIQMKTLTNKWYEEVRQGPSGSEDDEQELL.

11 helical membrane-spanning segments follow: residues 55–75, 79–99, 118–138, 151–171, 186–206, 256–276, 306–326, 349–369, 374–394, 412–432, and 446–466; these read EQSS…CIIL, LIRY…LGIL, EEMF…IFES, IGSI…VVGG, NMTD…VATI, TFLQ…ALGT, AYLP…VFAF, LVLF…NFFR, TPKM…PYAL, TTIV…MPLI, and NKKD…ESEH. Position 471 is a phosphothreonine (threonine 471). Serine 532 and serine 534 each carry phosphoserine.

This sequence belongs to the monovalent cation:proton antiporter 1 (CPA1) transporter (TC 2.A.36) family.

It is found in the golgi apparatus membrane. It localises to the golgi apparatus. The protein localises to the trans-Golgi network membrane. Its subcellular location is the endosome. The protein resides in the multivesicular body membrane. It is found in the apical cell membrane. It localises to the cytoplasmic vesicle. The protein localises to the secretory vesicle. Its subcellular location is the acrosome. The enzyme catalyses Na(+)(in) + H(+)(out) = Na(+)(out) + H(+)(in). Its function is as follows. Na(+)/H(+) antiporter. Mediates the electoneutral exchange of intracellular H(+) ions for extracellular Na(+) in 1:1 stoichiometry. Acts as an Na(+)/H(+) exchanger in the trans-Golgi. Contributes to the regulation of pH regulation of Golgi apparatus, and consequently, in protein trafficking and endosomal morphology. In germ cells, plays a crucial role in acrosome biogenesis and sperm development, probably by playing a role in the fusion of the Golgi-derived vesicles that form the acrosomal cap. Can also be active at the cell surface of specialized cells. In the small intestine, at the cell membrane, plays a major physiological role in transepithelial absorption of Na(+) and regulates intracellular pH homeostasis of intestinal epithelial cells. Acts as an important regulator of mucosal integrity in the intestine and in the stomach, could mediate the pH fluctuation necessary for mucin exocytosis or assist membrane trafficking of other proteins. Plays a role in photoreceptor survival and in the maintenance of intracellular pH homeostasis in retinal pigment epithelium (RPE cells). The protein is Sodium/hydrogen exchanger 8 (SLC9A8) of Macaca fascicularis (Crab-eating macaque).